The following is a 300-amino-acid chain: Urease accessory protein UreD (300 aa).

Belongs to the UreD family. As to quaternary structure, ureD, UreF and UreG form a complex that acts as a GTP-hydrolysis-dependent molecular chaperone, activating the urease apoprotein by helping to assemble the nickel containing metallocenter of UreC. The UreE protein probably delivers the nickel.

It is found in the cytoplasm. Functionally, required for maturation of urease via the functional incorporation of the urease nickel metallocenter. The chain is Urease accessory protein UreD from Prochlorococcus marinus (strain AS9601).